The following is a 127-amino-acid chain: HTH-type transcriptional regulator ImmR (127 aa).

Residues 1-12 show a composition bias toward basic and acidic residues; the sequence is MSLGKRLKEARQ. A disordered region spans residues 1–22; sequence MSLGKRLKEARQKAGYTQKEAA. An HTH cro/C1-type domain is found at 7–61; sequence LKEARQKAGYTQKEAAEKLNIGNNNLSNYERDYRDPDTDTLLKLSNLYNVSTDYL. Positions 18–37 form a DNA-binding region, H-T-H motif; the sequence is QKEAAEKLNIGNNNLSNYER.

This is HTH-type transcriptional regulator ImmR (immR) from Bacillus subtilis (strain 168).